A 102-amino-acid polypeptide reads, in one-letter code: Heat shock protein HspQ (102 aa).

This sequence belongs to the HspQ family.

Its subcellular location is the cytoplasm. Involved in the degradation of certain denaturated proteins, including DnaA, during heat shock stress. The chain is Heat shock protein HspQ from Pectobacterium atrosepticum (strain SCRI 1043 / ATCC BAA-672) (Erwinia carotovora subsp. atroseptica).